Here is a 346-residue protein sequence, read N- to C-terminus: MAIKTKTSLIPSCSSPEDLKRVLQTLGSSWGDVVEDLERLEVVPLKGAMTNEVYQINWPTLNGEDVHRKVLVRIYGDGVDLFFNRGDEIKTFECMSHHGYGPKLLGRFSDGRLEEFIHARTLSADDLRVAETSDFIAAKLREFHKLDMPGPKNVLLWERLRTWLKEAKNLASPIEMDKYRLEGLENEINLLEERLTRDDQEIGFCHNDLQYGNVMIDEVTNAITIIDYEYSSFNPIAYDIANHFCEMAANYHSDTPHVLDYTLYPGEGERRRFISTYLGSTGNATSDKEVERLLKDAESYTLANHIFWGLWGIISGHVNKIEFDYMEYARQRFEQYWLRKPLLLEG.

Residues Arg-73, Gln-210, and Asp-227 each contribute to the ATP site.

It belongs to the choline/ethanolamine kinase family. In terms of tissue distribution, expressed in roots. Expressed at low levels in cauline leaves and flowers.

It carries out the reaction choline + ATP = phosphocholine + ADP + H(+). Its pathway is phospholipid metabolism; phosphatidylcholine biosynthesis; phosphocholine from choline: step 1/1. Involved in phospholipid biosynthesis. Catalyzes the first step in phosphatidylcholine biosynthesis. The chain is Probable choline kinase 1 (CK1) from Arabidopsis thaliana (Mouse-ear cress).